A 101-amino-acid chain; its full sequence is CRISPR-associated endoribonuclease Cas2 (101 aa).

Mg(2+) is bound at residue D8.

The protein belongs to the CRISPR-associated endoribonuclease Cas2 protein family. As to quaternary structure, homodimer, forms a heterotetramer with a Cas1 homodimer. Mg(2+) serves as cofactor.

Functionally, CRISPR (clustered regularly interspaced short palindromic repeat), is an adaptive immune system that provides protection against mobile genetic elements (viruses, transposable elements and conjugative plasmids). CRISPR clusters contain sequences complementary to antecedent mobile elements and target invading nucleic acids. CRISPR clusters are transcribed and processed into CRISPR RNA (crRNA). Functions as a ssRNA-specific endoribonuclease. Involved in the integration of spacer DNA into the CRISPR cassette. This Treponema denticola (strain ATCC 35405 / DSM 14222 / CIP 103919 / JCM 8153 / KCTC 15104) protein is CRISPR-associated endoribonuclease Cas2.